Reading from the N-terminus, the 99-residue chain is MKFFVIALIVLLGLLQYRLWSGDNSLPEYFVLQKQIAAQQEGNAKLNERNQVLKEEIIDLKSGTEAIEERARNELGMVKEGETFYRVVGGDRSVSSPSQ.

Topologically, residues 1–3 are cytoplasmic; sequence MKF. Residues 4-21 traverse the membrane as a helical segment; sequence FVIALIVLLGLLQYRLWS. Residues 22–99 lie on the Periplasmic side of the membrane; that stretch reads GDNSLPEYFV…GDRSVSSPSQ (78 aa). Positions 31 to 73 form a coiled coil; sequence VLQKQIAAQQEGNAKLNERNQVLKEEIIDLKSGTEAIEERARN.

Belongs to the FtsB family. As to quaternary structure, part of a complex composed of FtsB, FtsL and FtsQ.

It is found in the cell inner membrane. Functionally, essential cell division protein. May link together the upstream cell division proteins, which are predominantly cytoplasmic, with the downstream cell division proteins, which are predominantly periplasmic. This chain is Cell division protein FtsB, found in Shewanella sp. (strain ANA-3).